Reading from the N-terminus, the 224-residue chain is tRNA (guanine-N(7)-)-methyltransferase (224 aa).

The S-adenosyl-L-methionine site is built by Glu-45, Glu-70, Asp-97, and Asp-119. Residue Asp-119 is part of the active site. Substrate contacts are provided by residues Lys-123, Asp-155, and Thr-199–Glu-202.

The protein belongs to the class I-like SAM-binding methyltransferase superfamily. TrmB family.

It carries out the reaction guanosine(46) in tRNA + S-adenosyl-L-methionine = N(7)-methylguanosine(46) in tRNA + S-adenosyl-L-homocysteine. Its pathway is tRNA modification; N(7)-methylguanine-tRNA biosynthesis. Its function is as follows. Catalyzes the formation of N(7)-methylguanine at position 46 (m7G46) in tRNA. The chain is tRNA (guanine-N(7)-)-methyltransferase from Ureaplasma urealyticum serovar 10 (strain ATCC 33699 / Western).